The chain runs to 346 residues: Hydroxycarboxylic acid receptor 1 (346 aa).

At 1 to 21 (MYNGSCCRIEGDTISQVMPPL) the chain is on the extracellular side. A glycan (N-linked (GlcNAc...) asparagine) is linked at N3. The chain crosses the membrane as a helical span at residues 22 to 42 (LIVAFVLGALGNGVALCGFCF). Topologically, residues 43 to 49 (HMKTWKP) are cytoplasmic. The chain crosses the membrane as a helical span at residues 50–70 (STVYLFNLAVADFLLMICLPF). The Extracellular portion of the chain corresponds to 71–89 (RTDYYLRRRHWAFGDIPCR). C88 and C165 are disulfide-bonded. Residues 90–110 (VGLFTLAMNRAGSIVFLTVVA) traverse the membrane as a helical segment. Residues 111–130 (ADRYFKVVHPHHAVNTISTR) are Cytoplasmic-facing. Residues 131–151 (VAAGIVCTLWALVILGTVYLL) form a helical membrane-spanning segment. Residues 152–182 (LENHLCVQETAVSCESFIMESANGWHDIMFQ) are Extracellular-facing. A helical membrane pass occupies residues 183–203 (LEFFMPLGIILFCSFKIVWSL). The Cytoplasmic portion of the chain corresponds to 204-220 (RRRQQLARQARMKKATR). Residues 221-241 (FIMVVAIVFITCYLPSVSARL) traverse the membrane as a helical segment. Residues 242–261 (YFLWTVPSSACDPSVHGALH) lie on the Extracellular side of the membrane. Residues 262–281 (ITLSFTYMNSMLDPLVYYFS) traverse the membrane as a helical segment. Topologically, residues 282–346 (SPSFPKFYNK…QWDPHIVEWH (65 aa)) are cytoplasmic.

This sequence belongs to the G-protein coupled receptor 1 family. In terms of tissue distribution, expressed abundantly in brown and white fat. It also detectable at lower levels in liver, kidney, skeletal muscle, brain and pituitary. Not detected in frontal, temporal and occipital lobes of the cortex, basal forebrain, caudate nucleus, nucleus accumbens and hippocampus.

Its subcellular location is the cell membrane. Functionally, acts as a receptor for L-lactate and mediates its anti-lipolytic effect through a G(i)-protein-mediated pathway. The chain is Hydroxycarboxylic acid receptor 1 (HCAR1) from Homo sapiens (Human).